The primary structure comprises 341 residues: L-threonine 3-dehydrogenase (341 aa).

Zn(2+) is bound at residue Cys-38. Residues Thr-40 and His-43 each act as charge relay system in the active site. 6 residues coordinate Zn(2+): His-63, Glu-64, Cys-93, Cys-96, Cys-99, and Cys-107. Residues Ile-175, Asp-195, Arg-200, 262 to 264, and 286 to 287 contribute to the NAD(+) site; these read LGI and IY.

It belongs to the zinc-containing alcohol dehydrogenase family. In terms of assembly, homotetramer. The cofactor is Zn(2+).

It is found in the cytoplasm. It catalyses the reaction L-threonine + NAD(+) = (2S)-2-amino-3-oxobutanoate + NADH + H(+). It participates in amino-acid degradation; L-threonine degradation via oxydo-reductase pathway; glycine from L-threonine: step 1/2. Functionally, catalyzes the NAD(+)-dependent oxidation of L-threonine to 2-amino-3-ketobutyrate. In Shewanella halifaxensis (strain HAW-EB4), this protein is L-threonine 3-dehydrogenase.